The primary structure comprises 332 residues: Ribosomal RNA small subunit methyltransferase C (332 aa).

Belongs to the methyltransferase superfamily. RsmC family. In terms of assembly, monomer.

It localises to the cytoplasm. The catalysed reaction is guanosine(1207) in 16S rRNA + S-adenosyl-L-methionine = N(2)-methylguanosine(1207) in 16S rRNA + S-adenosyl-L-homocysteine + H(+). Functionally, specifically methylates the guanine in position 1207 of 16S rRNA in the 30S particle. In Pseudomonas putida (strain ATCC 47054 / DSM 6125 / CFBP 8728 / NCIMB 11950 / KT2440), this protein is Ribosomal RNA small subunit methyltransferase C.